Here is a 475-residue protein sequence, read N- to C-terminus: Splicing factor U2AF 65 kDa subunit (475 aa).

A disordered region spans residues 1 to 90 (MSDFDEFERQ…RHEKKKKVRK (90 aa)). Residue Ser2 is modified to N-acetylserine. Phosphoserine is present on Ser2. Positions 2–93 (SDFDEFERQL…KKKKVRKYWD (92 aa)) are required for interaction with PRPF19. Basic and acidic residues predominate over residues 7 to 22 (FERQLNENKQERDKEN). The residue at position 15 (Lys15) is a 5-hydroxylysine; by JMJD6; alternate. Residue Lys15 forms a Glycyl lysine isopeptide (Lys-Gly) (interchain with G-Cter in SUMO2); alternate linkage. The necessary and sufficient to stimulate pre-mRNAs 3'-end cleavage in a CFIm complex-dependent manner stretch occupies residues 17 to 47 (ERDKENRHRKRSHSRSRSRDRKRRSRSRDRR). Residues 23–46 (RHRKRSHSRSRSRDRKRRSRSRDR) are compositionally biased toward basic residues. Positions 47–56 (RNRDQRSASR) are enriched in basic and acidic residues. Lys70 is covalently cross-linked (Glycyl lysine isopeptide (Lys-Gly) (interchain with G-Cter in SUMO2); alternate). Lys70 carries the post-translational modification N6-acetyllysine; alternate. Ser79 is modified (phosphoserine). Residues 79 to 89 (SPRHEKKKKVR) show a composition bias toward basic residues. RRM domains are found at residues 149–231 (RRLY…RPHD), 259–337 (HKLF…RASV), and 385–466 (LPEE…YCDP). Position 276 is a 5-hydroxylysine; by JMJD6 (Lys276). Ser294 carries the phosphoserine modification.

This sequence belongs to the splicing factor SR family. As to quaternary structure, interacts with U2AF1L4. Heterodimer with U2AF1. Binds unphosphorylated SF1. Interacts with SCAF11 and SNW1. Interacts with ZRSR2/U2AF1-RS2. Interacts with RBM17. Interacts with PRPF19; the interaction is direct. Interacts with POLR2A (via the C-terminal domain); recruits PRPF19 and the Prp19 complex to the pre-mRNA. Interacts with KHDC4 (Isoform 2). Interacts with ZRSR2. Interacts with the SF3B complex composed of SF3B1, SF3B2, SF3B3, SF3B4, SF3B5, SF3B6 and PHF5A. Interacts (via N-terminus) with CPSF7 (via C-terminus); this interaction stimulates pre-mRNA 3'-end processing by promoting the recruitment of the CFIm complex to cleavage and polyadenylation signals. Interacts with ARGLU1; interaction may be involved in ARGLU1-mediated modulation of alternative splicing. In terms of processing, lysyl-hydroxylation at Lys-15 and Lys-276 affects the mRNA splicing activity of the protein, leading to regulate some, but not all, alternative splicing events.

It localises to the nucleus. Its function is as follows. Plays a role in pre-mRNA splicing and 3'-end processing. By recruiting PRPF19 and the PRP19C/Prp19 complex/NTC/Nineteen complex to the RNA polymerase II C-terminal domain (CTD), and thereby pre-mRNA, may couple transcription to splicing. Induces cardiac troponin-T (TNNT2) pre-mRNA exon inclusion in muscle. Regulates the TNNT2 exon 5 inclusion through competition with MBNL1. Binds preferentially to a single-stranded structure within the polypyrimidine tract of TNNT2 intron 4 during spliceosome assembly. Required for the export of mRNA out of the nucleus, even if the mRNA is encoded by an intron-less gene. Represses the splicing of MAPT/Tau exon 10. Positively regulates pre-mRNA 3'-end processing by recruiting the CFIm complex to cleavage and polyadenylation signals. This chain is Splicing factor U2AF 65 kDa subunit (U2AF2), found in Homo sapiens (Human).